An 80-amino-acid polypeptide reads, in one-letter code: UPF0057 membrane protein ZK632.10 (80 aa).

The next 2 membrane-spanning stretches (helical) occupy residues 4–24 (ILLA…DVGC) and 32–52 (ILLT…IILC).

It belongs to the UPF0057 (PMP3) family.

It is found in the membrane. This Caenorhabditis elegans protein is UPF0057 membrane protein ZK632.10.